Reading from the N-terminus, the 711-residue chain is Arginine decarboxylase 2 (711 aa).

Lys-147 carries the N6-(pyridoxal phosphate)lysine modification. 331–341 (IDIGGGLGIDY) contributes to the substrate binding site. The disordered stretch occupies residues 642–661 (MHTKGGSEGENEEEEEDDEF). The span at 650–661 (GENEEEEEDDEF) shows a compositional bias: acidic residues.

Belongs to the Orn/Lys/Arg decarboxylase class-II family. SpeA subfamily. As to quaternary structure, homodimer and heterodimer with ADC1. It depends on pyridoxal 5'-phosphate as a cofactor. Mg(2+) is required as a cofactor.

Its subcellular location is the plastid. It is found in the chloroplast. It localises to the cytoplasm. The protein localises to the cytosol. It carries out the reaction L-arginine + H(+) = agmatine + CO2. It participates in amine and polyamine biosynthesis; agmatine biosynthesis; agmatine from L-arginine: step 1/1. Required for the biosynthesis of putrescine. Catalyzes the first step of polyamine (PA) biosynthesis to produce putrescine from arginine. Is a major contributor to basal arginine decarboxylase (ADC) activity and putrescine biosynthesis. Accumulation of putrescine plays a positive role in salt stress tolerance. Accumulation of putrescine plays a positive role in freezing tolerance. Production of PA is essential for normal seed development. Controls PA homeostasis which is crucial for normal plant growth and development. This chain is Arginine decarboxylase 2, found in Arabidopsis thaliana (Mouse-ear cress).